We begin with the raw amino-acid sequence, 453 residues long: uncharacterized protein (453 aa).

In terms of domain architecture, TRAM spans 5-63 (LLKKNQSIELTIEDLTHDGSGVGKIDGYPLFIPNTLPGEKVTAKIIKLNKNYGFARMEN). The [4Fe-4S] cluster site is built by cysteine 76, cysteine 82, cysteine 85, and cysteine 162. Residues glutamine 285, tyrosine 314, glutamate 335, and aspartate 383 each contribute to the S-adenosyl-L-methionine site. Cysteine 410 acts as the Nucleophile in catalysis.

Belongs to the class I-like SAM-binding methyltransferase superfamily. RNA M5U methyltransferase family.

This is an uncharacterized protein from Listeria monocytogenes serotype 4b (strain F2365).